The sequence spans 613 residues: Chaperone protein DnaK (613 aa).

The tract at residues 579 to 613 (MYQSASSTTQTGSGNQNSSKQENDKTVDAEYKEKS) is disordered. Residues 581-597 (QSASSTTQTGSGNQNSS) show a composition bias toward low complexity. Residues 599–613 (QENDKTVDAEYKEKS) are compositionally biased toward basic and acidic residues.

This sequence belongs to the heat shock protein 70 family.

Its function is as follows. Acts as a chaperone. This is Chaperone protein DnaK from Thermoplasma volcanium (strain ATCC 51530 / DSM 4299 / JCM 9571 / NBRC 15438 / GSS1).